Here is a 104-residue protein sequence, read N- to C-terminus: Large ribosomal subunit protein uL23 (104 aa).

The protein belongs to the universal ribosomal protein uL23 family. Part of the 50S ribosomal subunit. Contacts protein L29, and trigger factor when it is bound to the ribosome.

One of the early assembly proteins it binds 23S rRNA. One of the proteins that surrounds the polypeptide exit tunnel on the outside of the ribosome. Forms the main docking site for trigger factor binding to the ribosome. The protein is Large ribosomal subunit protein uL23 of Cupriavidus metallidurans (strain ATCC 43123 / DSM 2839 / NBRC 102507 / CH34) (Ralstonia metallidurans).